We begin with the raw amino-acid sequence, 677 residues long: Elongation factor G 2 (677 aa).

A tr-type G domain is found at 8–283 (SRIRNIGIIA…AVVNFLPSPE (276 aa)). GTP-binding positions include 17 to 24 (AHIDAGKT), 81 to 85 (DTPGH), and 135 to 138 (NKMD).

This sequence belongs to the TRAFAC class translation factor GTPase superfamily. Classic translation factor GTPase family. EF-G/EF-2 subfamily.

It localises to the cytoplasm. Catalyzes the GTP-dependent ribosomal translocation step during translation elongation. During this step, the ribosome changes from the pre-translocational (PRE) to the post-translocational (POST) state as the newly formed A-site-bound peptidyl-tRNA and P-site-bound deacylated tRNA move to the P and E sites, respectively. Catalyzes the coordinated movement of the two tRNA molecules, the mRNA and conformational changes in the ribosome. This Syntrophus aciditrophicus (strain SB) protein is Elongation factor G 2.